A 221-amino-acid chain; its full sequence is Ribosomal RNA large subunit methyltransferase E (221 aa).

S-adenosyl-L-methionine contacts are provided by Gly-60, Trp-62, Asp-89, Asp-105, and Asp-134. Residue Lys-174 is the Proton acceptor of the active site.

Belongs to the class I-like SAM-binding methyltransferase superfamily. RNA methyltransferase RlmE family.

Its subcellular location is the cytoplasm. The enzyme catalyses uridine(2552) in 23S rRNA + S-adenosyl-L-methionine = 2'-O-methyluridine(2552) in 23S rRNA + S-adenosyl-L-homocysteine + H(+). Functionally, specifically methylates the uridine in position 2552 of 23S rRNA at the 2'-O position of the ribose in the fully assembled 50S ribosomal subunit. The sequence is that of Ribosomal RNA large subunit methyltransferase E from Cupriavidus taiwanensis (strain DSM 17343 / BCRC 17206 / CCUG 44338 / CIP 107171 / LMG 19424 / R1) (Ralstonia taiwanensis (strain LMG 19424)).